The following is a 616-amino-acid chain: Proline dehydrogenase 1, mitochondrial (616 aa).

Belongs to the proline oxidase family. FAD serves as cofactor.

Its subcellular location is the mitochondrion matrix. The enzyme catalyses L-proline + a quinone = (S)-1-pyrroline-5-carboxylate + a quinol + H(+). The protein operates within amino-acid degradation; L-proline degradation into L-glutamate; L-glutamate from L-proline: step 1/2. Functionally, converts proline to delta-1-pyrroline-5-carboxylate. Through proline catabolism, promotes reactive oxygen species (ROS) production and the transcription of skn-1 target genes in response to bacterial infection by P.aeruginosa. The sequence is that of Proline dehydrogenase 1, mitochondrial from Caenorhabditis elegans.